Here is a 476-residue protein sequence, read N- to C-terminus: ATP synthase subunit beta (476 aa).

154-161 lines the ATP pocket; that stretch reads GGAGVGKT.

This sequence belongs to the ATPase alpha/beta chains family. F-type ATPases have 2 components, CF(1) - the catalytic core - and CF(0) - the membrane proton channel. CF(1) has five subunits: alpha(3), beta(3), gamma(1), delta(1), epsilon(1). CF(0) has four main subunits: a(1), b(1), b'(1) and c(9-12).

The protein localises to the cell inner membrane. The catalysed reaction is ATP + H2O + 4 H(+)(in) = ADP + phosphate + 5 H(+)(out). Its function is as follows. Produces ATP from ADP in the presence of a proton gradient across the membrane. The catalytic sites are hosted primarily by the beta subunits. In Rhodopseudomonas palustris (strain ATCC BAA-98 / CGA009), this protein is ATP synthase subunit beta.